Here is a 223-residue protein sequence, read N- to C-terminus: MSDRAETPSVREPFNAIEVRILGCLIEKQATTPESYPLTLNALVLACNQKSSREPLMNLASGQVGQGLRQLEGRSLVELVMGSRADRWEHRLDKALQLTPPQLSLLGLLLLRGPQTVNELLTRSARLYAFDDGEELQHQLERLIGRELVCRLPRQPGQREERYMHRLGSAEDLEELLAARATQAAVNEGAAGGRIEALEARIAELETRLAKLEEDLGSGEPRG.

It belongs to the UPF0502 family.

In Azotobacter vinelandii (strain DJ / ATCC BAA-1303), this protein is UPF0502 protein Avin_04790.